We begin with the raw amino-acid sequence, 384 residues long: Nodal homolog 2-B (384 aa).

A signal peptide spans 1-18; sequence MASLGAILLFAIASLMHG. A propeptide spanning residues 19 to 283 is cleaved from the precursor; that stretch reads RPIHSDRKGA…RVADARRHRR (265 aa). Residues Asn-71, Asn-173, and Asn-344 are each glycosylated (N-linked (GlcNAc...) asparagine). Cys-306 and Cys-372 are oxidised to a cystine.

This sequence belongs to the TGF-beta family. In terms of assembly, homodimer; disulfide-linked. Forms heterodimers with the TGF-beta family member derriere. Interacts with tsku; enhances nodal2 activity.

Its subcellular location is the secreted. In terms of biological role, cooperation and regulatory loops of multiple nodals are essential for mesendoderm patterning in early embryos. Essential for mesoderm formation and axial patterning during embryonic development. Activates the activin-like signaling pathway to induce dorsal and ventral mesoderm in animal cap ectoderm. In addition, also dorsalizes ventral marginal zone (VMZ) tissues during gastrulation. Induces muscle actin. Appears to act as both a short-range and long-range morphogen. The unprocessed protein inhibits bmp- and wnt-signaling. The chain is Nodal homolog 2-B (nodal2-b) from Xenopus laevis (African clawed frog).